Here is a 315-residue protein sequence, read N- to C-terminus: MAALGVLESDLPSAVTLLKNLQEQVMAVTAQVKSLTQKVQAGAYPTEKGLSFLEVKDQLLLMYLMDLTHLILDKASGGSLQGHDAVLRLVEIRTVLEKLRPLDQKLKYQIDKLIKTAVTGSLSENDPLRFKPHPSNMMSKLSSEDEEEDEAEDDQSEASGKKSVKGVSKKYVPPRLVPVHYDETEAEREKKRLERAKRRALSSSVIRELKEQYSDAPEEIRDARHPHVTRQSQEDQHRINYEESMMVRLSVSKREKGRRKRANVMSSQLHSLTHFSDISALTGGTVHLDEDQNPIKKRKKIPQKGRKKKGFRRRR.

A2 bears the N-acetylalanine mark. Positions 13–41 (SAVTLLKNLQEQVMAVTAQVKSLTQKVQA) form a coiled coil. The necessary for interaction with EIF4E stretch occupies residues 41 to 174 (AGAYPTEKGL…KGVSKKYVPP (134 aa)). Residues S121, S142, and S143 each carry the phosphoserine modification. The segment at 124 to 169 (ENDPLRFKPHPSNMMSKLSSEDEEEDEAEDDQSEASGKKSVKGVSK) is disordered. Residues 144–156 (EDEEEDEAEDDQS) show a composition bias toward acidic residues. Residues 181–205 (YDETEAEREKKRLERAKRRALSSSV) adopt a coiled-coil conformation. Residues S204 and S214 each carry the phosphoserine modification. Residues 277–315 (DISALTGGTVHLDEDQNPIKKRKKIPQKGRKKKGFRRRR) are disordered. Basic residues predominate over residues 295–315 (IKKRKKIPQKGRKKKGFRRRR).

Belongs to the SAS10 family. As to quaternary structure, part of the small subunit (SSU) processome, composed of more than 70 proteins and the RNA chaperone small nucleolar RNA (snoRNA) U3. Interacts with CPEB1 and EIF4E.

It localises to the nucleus. The protein resides in the nucleolus. The protein localises to the chromosome. It is found in the centromere. Its subcellular location is the cytoplasm. It localises to the cell projection. The protein resides in the axon. The protein localises to the dendrite. It is found in the filopodium. Its function is as follows. Part of the small subunit (SSU) processome, first precursor of the small eukaryotic ribosomal subunit. During the assembly of the SSU processome in the nucleolus, many ribosome biogenesis factors, an RNA chaperone and ribosomal proteins associate with the nascent pre-rRNA and work in concert to generate RNA folding, modifications, rearrangements and cleavage as well as targeted degradation of pre-ribosomal RNA by the RNA exosome. Its dissociation from the complex determines the transition from state pre-A1 to state pre-A1*. Inhibits mRNA translation in a cytoplasmic polyadenylation element (CPE)-dependent manner. In Homo sapiens (Human), this protein is Neuroguidin.